Here is a 668-residue protein sequence, read N- to C-terminus: MKHYSIQPANLEFNAEGTPVSRDFDDVYFSNDNGLEETRYVFLGGNQLEVRFPEHPHPLFVVAESGFGTGLNFLTLWQAFDQFREAHPQAQLQRLHFISFEKFPLTRADLALAHQHWPELAPWAEQLQAQWPMPLPGCHRLLLDEGRVTLDLWFGDINELTSQLDDSLNQKVDAWFLDGFAPAKNPDMWTQNLFNAMARLARPGGTLATFTSAGFVRRGLQDAGFTMQKRKGFGRKREMLCGVMEQTLPLPCSAPWFNRTGSSKREAAIIGGGIASALLSLALLRRGWQVTLYCADEAPALGASGNRQGALYPLLSKHDEALNRFFSNAFTFARRFYDQLPVKFDHDWCGVTQLGWDEKSQHKIAQMLSMDLPAELAVAVEANAVEQITGVATNCSGITYPQGGWLCPAELTRNVLELAQQQGLQIYYQYQLQNLSRKDDCWLLNFAGDQQATHSVVVLANGHQISRFSQTSTLPVYSVAGQVSHIPTTPELAELKQVLCYDGYLTPQNPANQHHCIGASYHRGSEDTAYSEDDQQQNRQRLIDCFPQAQWAKEVDVSDKEARCGVRCATRDHLPMVGNVPDYEATLVEYASLAEQKDEAVSAPVFDDLFMFAALGSRGLCSAPLCAEILAAQMSDEPIPMDASTLAALNPNRLWVRKLLKGKAVKAG.

Residues 1–245 (MKHYSIQPAN…KREMLCGVME (245 aa)) form a tRNA (mnm(5)s(2)U34)-methyltransferase region. Positions 270–668 (IGGGIASALL…LLKGKAVKAG (399 aa)) are FAD-dependent cmnm(5)s(2)U34 oxidoreductase.

It in the N-terminal section; belongs to the methyltransferase superfamily. tRNA (mnm(5)s(2)U34)-methyltransferase family. In the C-terminal section; belongs to the DAO family. FAD serves as cofactor.

It is found in the cytoplasm. The catalysed reaction is 5-aminomethyl-2-thiouridine(34) in tRNA + S-adenosyl-L-methionine = 5-methylaminomethyl-2-thiouridine(34) in tRNA + S-adenosyl-L-homocysteine + H(+). Catalyzes the last two steps in the biosynthesis of 5-methylaminomethyl-2-thiouridine (mnm(5)s(2)U) at the wobble position (U34) in tRNA. Catalyzes the FAD-dependent demodification of cmnm(5)s(2)U34 to nm(5)s(2)U34, followed by the transfer of a methyl group from S-adenosyl-L-methionine to nm(5)s(2)U34, to form mnm(5)s(2)U34. The chain is tRNA 5-methylaminomethyl-2-thiouridine biosynthesis bifunctional protein MnmC from Escherichia coli (strain K12 / DH10B).